Consider the following 1093-residue polypeptide: Fused isobutyryl-CoA mutase (1093 aa).

Residues 1 to 20 (MTDLSDVSRTAAAKPPAVPG) are disordered. In terms of domain architecture, B12-binding spans 26-156 (KVRFVTAASL…AGMITDMAQR (131 aa)). Residue His39 participates in adenosylcob(III)alamin binding. The segment at 169-417 (LDTVVAGDRR…YQGLVGALGA (249 aa)) is GTPase chaperone MeaI. 219–224 (GAGKSS) provides a ligand contact to GTP. Ser223, Ile248, Asp249, and Asp262 together coordinate Mg(2+). GTP is bound at residue Arg265. Residues Glu310 and Thr311 each coordinate Mg(2+). Residue 357 to 360 (NKFD) participates in GTP binding. The linker stretch occupies residues 418 to 579 (RGMSLKPGTL…MRENVPGSFP (162 aa)). Positions 587, 622, 728, 772, 821, 856, and 861 each coordinate substrate. Glu973 and Asn1092 together coordinate GTP.

This sequence belongs to the IcmF family. In terms of assembly, homodimer. The cofactor is adenosylcob(III)alamin. Mg(2+) is required as a cofactor.

The catalysed reaction is 2-methylpropanoyl-CoA = butanoyl-CoA. The enzyme catalyses 3-methylbutanoyl-CoA = 2,2-dimethylpropanoyl-CoA. It catalyses the reaction GTP + H2O = GDP + phosphate + H(+). Is prone to inactivation during catalytic turnover due to the occasional loss of the 5'-deoxyadenosine moiety and formation of the inactive cob(II)alamin cofactor in its active site. The GTPase activity of IcmF powers the ejection of the inactive cofactor and requires the presence of an acceptor protein, adenosyltransferase (ATR), for receiving it. ATR, in turn, catalyzes an adenosylation reaction converting cob(II)alamin in the presence of ATP and a reductant to the active AdoCbl cofactor. The repaired cofactor is then reloaded onto IcmF in a GTPase-gated step, regenerating active enzyme. The GTPase activity of IcmF is significantly decreased in the presence of excess of AdoCbl or cob(II)alamin and is higher in the apoenzyme state, indicating that the G-domain senses the presence and identity of the cofactor in the mutase active site. In terms of biological role, catalyzes the reversible interconversion of isobutyryl-CoA and n-butyryl-CoA, and to a much lesser extent, of pivalyl-CoA and isovaleryl-CoA, using radical chemistry. Also exhibits GTPase activity, associated with its G-protein domain (MeaI) that functions as a chaperone that assists cofactor delivery and proper holo-enzyme assembly. The G-domain of IcmF also has a role in its cofactor repair. Does not display ATPase activity. The sequence is that of Fused isobutyryl-CoA mutase from Cupriavidus metallidurans (strain ATCC 43123 / DSM 2839 / NBRC 102507 / CH34) (Ralstonia metallidurans).